The chain runs to 96 residues: MREYEAVVLVRPNLEEEALQGVIDKFVNLVPQQGGEVVKVDKWGKRRLQYEVKKFKEAFYFLLNFKGEPAVAQELERVMKISDDIIRFLVVRKDEQ.

It belongs to the bacterial ribosomal protein bS6 family.

Functionally, binds together with bS18 to 16S ribosomal RNA. The polypeptide is Small ribosomal subunit protein bS6 (Heliobacterium modesticaldum (strain ATCC 51547 / Ice1)).